The chain runs to 372 residues: Ligninase H2 (372 aa).

Residues 1–21 (MAFKQLLAALSVALTLQVTQA) form the signal peptide. Residues 22 to 28 (APNLDKR) constitute a propeptide that is removed on maturation. Intrachain disulfides connect C31–C44, C43–C314, C63–C149, and C278–C344. Catalysis depends on H76, which acts as the Proton acceptor. Positions 77, 95, 97, and 99 each coordinate Ca(2+). H205 is a binding site for heme b. The Ca(2+) site is built by S206, D223, T225, Q228, and D230. N286 is a glycosylation site (N-linked (GlcNAc...) asparagine).

Belongs to the peroxidase family. Ligninase subfamily. Requires heme b as cofactor. The cofactor is Ca(2+).

The catalysed reaction is 1-(3,4-dimethoxyphenyl)-2-(2-methoxyphenoxy)propane-1,3-diol + H2O2 = 3,4-dimethoxybenzaldehyde + guaiacol + glycolaldehyde + H2O. It carries out the reaction 2 (3,4-dimethoxyphenyl)methanol + H2O2 = 2 (3,4-dimethoxyphenyl)methanol radical + 2 H2O. The protein operates within secondary metabolite metabolism; lignin degradation. Its function is as follows. Depolymerization of lignin. Catalyzes the C(alpha)-C(beta) cleavage of the propyl side chains of lignin. The protein is Ligninase H2 (GLG4) of Phanerodontia chrysosporium (White-rot fungus).